We begin with the raw amino-acid sequence, 130 residues long: Small ribosomal subunit protein uS8y (130 aa).

The protein belongs to the universal ribosomal protein uS8 family.

The sequence is that of Small ribosomal subunit protein uS8y (RPS15AC) from Arabidopsis thaliana (Mouse-ear cress).